The following is a 214-amino-acid chain: Small ribosomal subunit protein eS1 (214 aa).

The protein belongs to the eukaryotic ribosomal protein eS1 family.

In Aeropyrum pernix (strain ATCC 700893 / DSM 11879 / JCM 9820 / NBRC 100138 / K1), this protein is Small ribosomal subunit protein eS1.